The following is a 582-amino-acid chain: NudC domain-containing protein 1 (582 aa).

Residue serine 7 is modified to Phosphoserine. Residues 272 to 360 form the CS domain; that stretch reads KVEPLYYWQQ…NEGLMWPELV (89 aa). Serine 387 is subject to Phosphoserine.

It localises to the cytoplasm. Its subcellular location is the nucleus. This is NudC domain-containing protein 1 from Mus musculus (Mouse).